A 161-amino-acid chain; its full sequence is MAKKNSKTKNNDNTIARNKRASHDYHLEERFEAGLELQGWEVKSLRAGKANIADSYIFLKNGEAWLLGATFPPLLVASSHVVCDPMRYRKLLLNRRELDNLVGKVERQGYSIIPISLYWKHAWVKISFALAKGKQEHDKRADVKDREWKVDKERMMKHSVR.

The protein belongs to the SmpB family.

It localises to the cytoplasm. Functionally, required for rescue of stalled ribosomes mediated by trans-translation. Binds to transfer-messenger RNA (tmRNA), required for stable association of tmRNA with ribosomes. tmRNA and SmpB together mimic tRNA shape, replacing the anticodon stem-loop with SmpB. tmRNA is encoded by the ssrA gene; the 2 termini fold to resemble tRNA(Ala) and it encodes a 'tag peptide', a short internal open reading frame. During trans-translation Ala-aminoacylated tmRNA acts like a tRNA, entering the A-site of stalled ribosomes, displacing the stalled mRNA. The ribosome then switches to translate the ORF on the tmRNA; the nascent peptide is terminated with the 'tag peptide' encoded by the tmRNA and targeted for degradation. The ribosome is freed to recommence translation, which seems to be the essential function of trans-translation. The protein is SsrA-binding protein of Psychromonas ingrahamii (strain DSM 17664 / CCUG 51855 / 37).